Consider the following 334-residue polypeptide: Proline-serine-threonine phosphatase-interacting protein 2 (334 aa).

An F-BAR domain is found at 4 to 264 (SLFKGNFWST…SLETCSIEKD (261 aa)). Positions 66 to 163 (GQSEINTLKR…AEQAVHRSAN (98 aa)) form a coiled coil. The disordered stretch occupies residues 288–322 (YSPQRNAAPPGKTTGPNPARRGPLPVPKRIPDDPD). Residues tyrosine 323 and tyrosine 329 each carry the phosphotyrosine modification.

Post-translationally, phosphorylated on tyrosine. As to expression, expressed in macrophage-containing tissues, including bone marrow, spleen, liver, kidney, intestine and brain.

It localises to the cytoplasm. Its subcellular location is the membrane. Its function is as follows. Binds to F-actin. May be involved in regulation of the actin cytoskeleton. The chain is Proline-serine-threonine phosphatase-interacting protein 2 (Pstpip2) from Mus musculus (Mouse).